The sequence spans 190 residues: Interferon alpha-11 (190 aa).

The signal sequence occupies residues 1–23 (MARLCAFLMILIVMSYWSTCSLG). 2 disulfide bridges follow: cysteine 24/cysteine 122 and cysteine 52/cysteine 162. N-linked (GlcNAc...) asparagine glycosylation occurs at asparagine 101.

It belongs to the alpha/beta interferon family. Post-translationally, N-glycosylated.

The protein localises to the secreted. Its function is as follows. Has antiviral and antiproliferative activities. Produced by macrophages and stimulates the production of two enzymes: a protein kinase and an oligoadenylate synthetase. During viral infection, mediates antiviral effect, either directly by inducing interferon-stimulated genes, either indirectly through stimulation of natural killer cells enabling them to control viral replication. The sequence is that of Interferon alpha-11 (Ifna11) from Mus musculus (Mouse).